Here is a 187-residue protein sequence, read N- to C-terminus: Elongation factor P (187 aa).

The protein belongs to the elongation factor P family.

It localises to the cytoplasm. Its pathway is protein biosynthesis; polypeptide chain elongation. In terms of biological role, involved in peptide bond synthesis. Stimulates efficient translation and peptide-bond synthesis on native or reconstituted 70S ribosomes in vitro. Probably functions indirectly by altering the affinity of the ribosome for aminoacyl-tRNA, thus increasing their reactivity as acceptors for peptidyl transferase. This Mycolicibacterium smegmatis (strain ATCC 700084 / mc(2)155) (Mycobacterium smegmatis) protein is Elongation factor P.